A 237-amino-acid polypeptide reads, in one-letter code: Phosphoribosylaminoimidazole-succinocarboxamide synthase (237 aa).

The protein belongs to the SAICAR synthetase family.

It catalyses the reaction 5-amino-1-(5-phospho-D-ribosyl)imidazole-4-carboxylate + L-aspartate + ATP = (2S)-2-[5-amino-1-(5-phospho-beta-D-ribosyl)imidazole-4-carboxamido]succinate + ADP + phosphate + 2 H(+). The protein operates within purine metabolism; IMP biosynthesis via de novo pathway; 5-amino-1-(5-phospho-D-ribosyl)imidazole-4-carboxamide from 5-amino-1-(5-phospho-D-ribosyl)imidazole-4-carboxylate: step 1/2. The polypeptide is Phosphoribosylaminoimidazole-succinocarboxamide synthase (Pectobacterium atrosepticum (strain SCRI 1043 / ATCC BAA-672) (Erwinia carotovora subsp. atroseptica)).